A 515-amino-acid polypeptide reads, in one-letter code: G-protein coupled receptor 176 (515 aa).

Over 1–41 the chain is Extracellular; it reads MGHNSSWVSPNTSHPRNTSGAEAGANLSAFGELSEAQLYRQ. N-linked (GlcNAc...) asparagine glycans are attached at residues Asn-4, Asn-11, Asn-17, and Asn-26. Residues 42-64 form a helical membrane-spanning segment; the sequence is FTTTVQVVIFIGSLLGNFMVLWS. Residues 65–77 are Cytoplasmic-facing; sequence TCRTTVFKSVTNR. The helical transmembrane segment at 78–98 threads the bilayer; sequence FIKNLACSGICASVVCVPFDI. Residues 99-108 are Extracellular-facing; the sequence is ILSSSPHCCW. The chain crosses the membrane as a helical span at residues 109–129; it reads WIYTMLFCKVLKFLHKVFCSV. At 130–157 the chain is on the cytoplasmic side; sequence TVLSFPAIALDRYYSVLYPLERKISDAK. A helical transmembrane segment spans residues 158 to 177; that stretch reads SRELVMYIWAHAVVASVPVF. Over 178–204 the chain is Extracellular; that stretch reads AVTNVADIYAMSTCTEVWSNSLGHLVY. Residues 205–225 form a helical membrane-spanning segment; that stretch reads VLIYNVTTVIVPVAVVFLFLI. The Cytoplasmic segment spans residues 226-264; it reads LIRRALSASQKKKVIIAALRTPQNTISIPYASQREAELH. A helical membrane pass occupies residues 265-285; sequence ATLLSMVTVFILCSVPYATLV. The Extracellular portion of the chain corresponds to 286–301; it reads VYQTVLNVPNTSVFLL. Residues 302–322 traverse the membrane as a helical segment; that stretch reads LTAIWLPKVSLLANPVLFLTV. Topologically, residues 323 to 515 are cytoplasmic; sequence NKSVRKCLVG…KVSIFPKVDS (193 aa). Residues 407–435 form a disordered region; it reads SCPEGEQEPPQLAPSVPPPGTVDSEPRVS. Over residues 417–426 the composition is skewed to pro residues; the sequence is QLAPSVPPPG.

It belongs to the G-protein coupled receptor 1 family. Expressed mainly in the brain, with prominent expression in the SCN (at protein level).

The protein resides in the cell membrane. Functionally, orphan receptor involved in normal circadian rhythm behavior. Acts through the G-protein subclass G(z)-alpha and has an agonist-independent basal activity to repress cAMP production. The sequence is that of G-protein coupled receptor 176 (Gpr176) from Mus musculus (Mouse).